A 199-amino-acid chain; its full sequence is Imidazoleglycerol-phosphate dehydratase (199 aa).

It belongs to the imidazoleglycerol-phosphate dehydratase family.

It is found in the cytoplasm. The enzyme catalyses D-erythro-1-(imidazol-4-yl)glycerol 3-phosphate = 3-(imidazol-4-yl)-2-oxopropyl phosphate + H2O. Its pathway is amino-acid biosynthesis; L-histidine biosynthesis; L-histidine from 5-phospho-alpha-D-ribose 1-diphosphate: step 6/9. In Mesorhizobium japonicum (strain LMG 29417 / CECT 9101 / MAFF 303099) (Mesorhizobium loti (strain MAFF 303099)), this protein is Imidazoleglycerol-phosphate dehydratase.